Reading from the N-terminus, the 658-residue chain is Exoribonuclease 2 (658 aa).

The RNB domain occupies Arg189–Thr531. The region spanning Lys576 to Cys658 is the S1 motif domain.

It belongs to the RNR ribonuclease family. RNase II subfamily.

The protein resides in the cytoplasm. The enzyme catalyses Exonucleolytic cleavage in the 3'- to 5'-direction to yield nucleoside 5'-phosphates.. Involved in mRNA degradation. Hydrolyzes single-stranded polyribonucleotides processively in the 3' to 5' direction. The protein is Exoribonuclease 2 of Pasteurella multocida (strain Pm70).